Consider the following 365-residue polypeptide: Terpene cyclase DEP1 (365 aa).

Helical transmembrane passes span 10–30, 82–102, 116–136, 158–178, 188–208, 233–253, 297–317, and 338–358; these read LYLSALGVWGLWGYAYFNGMF, LLFFDINYAVACTNLWTLIES, AWAMVLCNANGAAIVLPIYLY, LPIITVVMLLQPLLIFAPAWF, ALIALFQVAPVIVLGLYVGIT, LILAGSVASAVHIYTLTGALF, LFSQWDWIVVCLTSVVYAQLL, and MIYLTIATVVLGPGGAGSFAL.

It belongs to the membrane-bound ascI terpene cyclase family.

The protein resides in the membrane. It functions in the pathway polyketide biosynthesis. Functionally, part of the gene cluster that mediates the biosynthesis of depudecin, a highly oxidized eleven-carbon linear polyketide that acts as a histone deacetylase (HDAC) inhibitor and makes a small contribution to pathogenesis. The reducing polyketide synthase DEP5 is the central enzyme in depudecin biosynthesis by yielding the backbone polyketide chain. The monooxygenases DEP2 and DEP4, as well as the uncharacterized protein DEP1, then act as tailoring enzymes to modify the intermediate polyketide chain into depudecin. The sequence is that of Terpene cyclase DEP1 from Fusarium langsethiae.